The chain runs to 93 residues: SH3 domain-binding glutamic acid-rich-like protein 3 (93 aa).

Ser2 is modified (N-acetylserine). The O-linked (GalNAc...) serine glycan is linked to Ser2. Residues 2–93 (SGRRVYSTSV…NTLQEFLKLA (92 aa)) form the Glutaredoxin domain. Thr9 and Thr12 each carry an O-linked (GalNAc...) threonine glycan.

It belongs to the SH3BGR family. As to quaternary structure, homodimer. Interacts with MYO1C (via its IQ motifs); the interaction is dependent on calcium and takes place at membrane ruffles. Post-translationally, may be glycosylated.

It localises to the cytoplasm. The protein localises to the cytosol. It is found in the cell projection. Its subcellular location is the ruffle membrane. The protein resides in the nucleus. Functionally, could act as a modulator of glutaredoxin biological activity. May play a role in cytoskeleton organization. This chain is SH3 domain-binding glutamic acid-rich-like protein 3 (SH3BGRL3), found in Pongo abelii (Sumatran orangutan).